The following is a 1437-amino-acid chain: Protein CC2D2B (1437 aa).

This chain is Protein CC2D2B, found in Homo sapiens (Human).